Consider the following 341-residue polypeptide: Protein DOWNY MILDEW RESISTANCE 6 (341 aa).

The Fe2OG dioxygenase domain occupies 188–288; that stretch reads QGQHMAVNYY…RLSVASFLCP (101 aa). 3 residues coordinate Fe cation: His-212, Asp-214, and His-269. Arg-279 serves as a coordination point for 2-oxoglutarate.

The protein belongs to the iron/ascorbate-dependent oxidoreductase family. Requires Fe(2+) as cofactor.

It catalyses the reaction salicylate + NADH + O2 + H(+) = 2,3-dihydroxybenzoate + NAD(+) + H2O. Functionally, converts salicylic acid (SA) to 2,3-dihydroxybenzoic acid (2,3-DHBA). Suppressor of immunity. Regulates negatively defense associated genes expression (e.g. PR-1, PR-2, and PR-5). Negative regulator of defense against Hyaloperonospora arabidopsidis. Its function is as follows. (Microbial infection) Required for susceptibility to the downy mildew pathogen Hyaloperonospora arabidopsidis. In terms of biological role, (Microbial infection) Required for susceptibility to Pseudomonas syringae pv. tomato DC3000. (Microbial infection) Required for susceptibility to the oomycete Phytophthora capsici. This Arabidopsis thaliana (Mouse-ear cress) protein is Protein DOWNY MILDEW RESISTANCE 6.